The chain runs to 565 residues: Proline--tRNA ligase (565 aa).

It belongs to the class-II aminoacyl-tRNA synthetase family. ProS type 1 subfamily. Homodimer.

It localises to the cytoplasm. It carries out the reaction tRNA(Pro) + L-proline + ATP = L-prolyl-tRNA(Pro) + AMP + diphosphate. Its function is as follows. Catalyzes the attachment of proline to tRNA(Pro) in a two-step reaction: proline is first activated by ATP to form Pro-AMP and then transferred to the acceptor end of tRNA(Pro). As ProRS can inadvertently accommodate and process non-cognate amino acids such as alanine and cysteine, to avoid such errors it has two additional distinct editing activities against alanine. One activity is designated as 'pretransfer' editing and involves the tRNA(Pro)-independent hydrolysis of activated Ala-AMP. The other activity is designated 'posttransfer' editing and involves deacylation of mischarged Ala-tRNA(Pro). The misacylated Cys-tRNA(Pro) is not edited by ProRS. This Francisella tularensis subsp. tularensis (strain WY96-3418) protein is Proline--tRNA ligase.